The chain runs to 662 residues: Calcium-dependent protease (662 aa).

Positions 196-529 (QWHLKQTTIG…YGRINALKAV (334 aa)) constitute a Peptidase S8 domain. Catalysis depends on charge relay system residues Asp-233, His-270, and Ser-466. The P/Homo B domain maps to 535–662 (AQPEPVSIFT…IRSLTIELGF (128 aa)).

It belongs to the peptidase S8 family.

It is found in the cytoplasm. Degrades phycobiliproteins in vitro. Has a substrate specificity similar to that of trypsin. The protein is Calcium-dependent protease (prcA) of Trichormus variabilis (strain ATCC 29413 / PCC 7937) (Anabaena variabilis).